The following is a 30-amino-acid chain: GRADYNFGYGLGRGTRKFFNGIGRWVRKTF.

Its subcellular location is the secreted. In terms of biological role, bacteriocin with activity against species of Lactobacillus, Lactococcus, Pediococcus, Leuconostoc and against B.subtilis and, to a lesser extent, against B.coagulans, B.cereus and species of Enterococcus, Listeria, Kocuria, Staphylococcus, Corynebacterium, Salmonella, Pseudomonas and Escherichia. In Lactiplantibacillus plantarum (Lactobacillus plantarum), this protein is Bacteriocin plantaricin KL-1Y.